Reading from the N-terminus, the 256-residue chain is Cell division protein ZipA (256 aa).

Residues 1–6 (MQYGRQ) are Periplasmic-facing. A helical transmembrane segment spans residues 7–27 (ILICIGILTVIILLLYGLLNS). Topologically, residues 28–256 (YWDRTVTFCK…RHVLSANKST (229 aa)) are cytoplasmic.

The protein belongs to the ZipA family. In terms of assembly, interacts with FtsZ via their C-terminal domains.

The protein resides in the cell inner membrane. Functionally, essential cell division protein that stabilizes the FtsZ protofilaments by cross-linking them and that serves as a cytoplasmic membrane anchor for the Z ring. Also required for the recruitment to the septal ring of downstream cell division proteins. The polypeptide is Cell division protein ZipA (Baumannia cicadellinicola subsp. Homalodisca coagulata).